A 303-amino-acid chain; its full sequence is Putative S-adenosyl-L-methionine-dependent methyltransferase Mb1931c (303 aa).

Residues aspartate 129 and 158 to 159 (DL) each bind S-adenosyl-L-methionine.

It belongs to the UPF0677 family.

Functionally, exhibits S-adenosyl-L-methionine-dependent methyltransferase activity. This is Putative S-adenosyl-L-methionine-dependent methyltransferase Mb1931c from Mycobacterium bovis (strain ATCC BAA-935 / AF2122/97).